The sequence spans 115 residues: Nitrogenase iron-iron protein delta chain (115 aa).

As to quaternary structure, hexamer of two alpha, two beta, and two delta chains. It depends on iron-sulfur cluster as a cofactor.

The catalysed reaction is N2 + 8 reduced [2Fe-2S]-[ferredoxin] + 16 ATP + 16 H2O = H2 + 8 oxidized [2Fe-2S]-[ferredoxin] + 2 NH4(+) + 16 ADP + 16 phosphate + 6 H(+). Functionally, the key enzymatic reactions in nitrogen fixation are catalyzed by the nitrogenase complex, which has 2 components: the iron protein (component 2) and a component 1 which is either a molybdenum-iron protein, a vanadium-iron, or an iron-iron protein. In Rhodobacter capsulatus (Rhodopseudomonas capsulata), this protein is Nitrogenase iron-iron protein delta chain (anfG).